The chain runs to 263 residues: Purine nucleoside phosphorylase SERP0752 (263 aa).

Positions 79, 124, and 141 each coordinate Zn(2+).

Belongs to the purine nucleoside phosphorylase YfiH/LACC1 family. In terms of assembly, homodimer. Cu(2+) is required as a cofactor. It depends on Zn(2+) as a cofactor.

It catalyses the reaction adenosine + phosphate = alpha-D-ribose 1-phosphate + adenine. The enzyme catalyses S-methyl-5'-thioadenosine + phosphate = 5-(methylsulfanyl)-alpha-D-ribose 1-phosphate + adenine. The catalysed reaction is inosine + phosphate = alpha-D-ribose 1-phosphate + hypoxanthine. It carries out the reaction adenosine + H2O + H(+) = inosine + NH4(+). Purine nucleoside enzyme that catalyzes the phosphorolysis of adenosine and inosine nucleosides, yielding D-ribose 1-phosphate and the respective free bases, adenine and hypoxanthine. Also catalyzes the phosphorolysis of S-methyl-5'-thioadenosine into adenine and S-methyl-5-thio-alpha-D-ribose 1-phosphate. Also has adenosine deaminase activity. The chain is Purine nucleoside phosphorylase SERP0752 from Staphylococcus epidermidis (strain ATCC 35984 / DSM 28319 / BCRC 17069 / CCUG 31568 / BM 3577 / RP62A).